The primary structure comprises 55 residues: Large ribosomal subunit protein bL33 (55 aa).

The protein belongs to the bacterial ribosomal protein bL33 family.

This is Large ribosomal subunit protein bL33 from Proteus mirabilis (strain HI4320).